We begin with the raw amino-acid sequence, 248 residues long: Malonyl-[acyl-carrier protein] O-methyltransferase 2 (248 aa).

The protein belongs to the methyltransferase superfamily.

The enzyme catalyses malonyl-[ACP] + S-adenosyl-L-methionine = malonyl-[ACP] methyl ester + S-adenosyl-L-homocysteine. Its pathway is cofactor biosynthesis; biotin biosynthesis. Functionally, converts the free carboxyl group of a malonyl-thioester to its methyl ester by transfer of a methyl group from S-adenosyl-L-methionine (SAM). It allows to synthesize pimeloyl-ACP via the fatty acid synthetic pathway. The polypeptide is Malonyl-[acyl-carrier protein] O-methyltransferase 2 (Coxiella burnetii (strain RSA 493 / Nine Mile phase I)).